The sequence spans 350 residues: Sulfate/thiosulfate import ATP-binding protein cysA (350 aa).

The ABC transporter domain occupies 3 to 237 (IEVRNLSKRF…PATPFVYGFL (235 aa)). 35–42 (GPSGCGKT) is an ATP binding site.

Belongs to the ABC transporter superfamily. Sulfate/tungstate importer (TC 3.A.1.6) family.

Its subcellular location is the mitochondrion. The catalysed reaction is sulfate(out) + ATP + H2O = sulfate(in) + ADP + phosphate + H(+). It catalyses the reaction thiosulfate(out) + ATP + H2O = thiosulfate(in) + ADP + phosphate + H(+). In terms of biological role, part of the ABC transporter complex involved in sulfate/thiosulfate import. Responsible for energy coupling to the transport system. The sequence is that of Sulfate/thiosulfate import ATP-binding protein cysA (CYSA) from Cucumis sativus (Cucumber).